A 209-amino-acid polypeptide reads, in one-letter code: Large ribosomal subunit protein uL3 (209 aa).

The interval 132–153 (ATHGNSLSHRVPGSIGQNQTPG) is disordered. Gln-150 is subject to N5-methylglutamine.

Belongs to the universal ribosomal protein uL3 family. In terms of assembly, part of the 50S ribosomal subunit. Forms a cluster with proteins L14 and L19. Methylated by PrmB.

In terms of biological role, one of the primary rRNA binding proteins, it binds directly near the 3'-end of the 23S rRNA, where it nucleates assembly of the 50S subunit. The sequence is that of Large ribosomal subunit protein uL3 from Enterobacter sp. (strain 638).